Here is a 224-residue protein sequence, read N- to C-terminus: 7-cyano-7-deazaguanine synthase (224 aa).

Position 8-18 (8-18) interacts with ATP; the sequence is VSGGADSATVL. Positions 189, 199, 202, and 205 each coordinate Zn(2+).

It belongs to the QueC family. Zn(2+) serves as cofactor.

The catalysed reaction is 7-carboxy-7-deazaguanine + NH4(+) + ATP = 7-cyano-7-deazaguanine + ADP + phosphate + H2O + H(+). Its pathway is purine metabolism; 7-cyano-7-deazaguanine biosynthesis. Its function is as follows. Catalyzes the ATP-dependent conversion of 7-carboxy-7-deazaguanine (CDG) to 7-cyano-7-deazaguanine (preQ(0)). This Rickettsia felis (strain ATCC VR-1525 / URRWXCal2) (Rickettsia azadi) protein is 7-cyano-7-deazaguanine synthase.